Reading from the N-terminus, the 499-residue chain is Cytochrome P450 81E8 (499 aa).

A helical transmembrane segment spans residues 3–23; the sequence is TFYLSLIISLFFLIITLKVFF. C436 contacts heme.

This sequence belongs to the cytochrome P450 family. Heme serves as cofactor.

The protein localises to the membrane. In terms of biological role, probable monooxygenases exhibiting no activity with isoflavones such as formononetin, biochanin A, pseudobaptigenin, daidzein, genistein, isoformononetin and prunetin, or with flavonoids including naringenin, liquiritigenin, apigenin, luteolin, or kaempferol. This Medicago truncatula (Barrel medic) protein is Cytochrome P450 81E8.